The sequence spans 256 residues: Trypsin, alkaline C (256 aa).

Residues 1-17 (MRLFLALLALGFAAVAA) form the signal peptide. Positions 18-24 (VPANPQR) are cleaved as a propeptide — activation peptide. The region spanning 25–256 (IVGGSTTTIQ…RYTSWISNNS (232 aa)) is the Peptidase S1 domain. Cys-55 and Cys-71 form a disulfide bridge. Catalysis depends on charge relay system residues His-70 and Asp-115. Cystine bridges form between Cys-180–Cys-197 and Cys-209–Cys-233. Catalysis depends on Ser-213, which acts as the Charge relay system.

The protein belongs to the peptidase S1 family. As to expression, midgut.

The protein resides in the secreted. It is found in the extracellular space. It catalyses the reaction Preferential cleavage: Arg-|-Xaa, Lys-|-Xaa.. The polypeptide is Trypsin, alkaline C (Manduca sexta (Tobacco hawkmoth)).